The following is a 338-amino-acid chain: GTPase Obg (338 aa).

Residues 1-159 enclose the Obg domain; the sequence is MSFIDEVKIH…RWLRLELKLM (159 aa). An OBG-type G domain is found at 160–331; sequence ADVGLLGMPS…LLDEIARNLW (172 aa). GTP-binding positions include 166-173, 191-195, 213-216, 283-286, and 312-314; these read GMPSVGKS, FTTLK, DIPG, NKID, and SAA. Residues S173 and T193 each coordinate Mg(2+).

This sequence belongs to the TRAFAC class OBG-HflX-like GTPase superfamily. OBG GTPase family. As to quaternary structure, monomer. Mg(2+) serves as cofactor.

The protein localises to the cytoplasm. Its function is as follows. An essential GTPase which binds GTP, GDP and possibly (p)ppGpp with moderate affinity, with high nucleotide exchange rates and a fairly low GTP hydrolysis rate. Plays a role in control of the cell cycle, stress response, ribosome biogenesis and in those bacteria that undergo differentiation, in morphogenesis control. This Geotalea uraniireducens (strain Rf4) (Geobacter uraniireducens) protein is GTPase Obg.